A 188-amino-acid chain; its full sequence is Transcription factor FapR (188 aa).

Belongs to the FapR family.

In terms of biological role, transcriptional factor involved in regulation of membrane lipid biosynthesis by repressing genes involved in fatty acid and phospholipid metabolism. The chain is Transcription factor FapR from Bacillus licheniformis (strain ATCC 14580 / DSM 13 / JCM 2505 / CCUG 7422 / NBRC 12200 / NCIMB 9375 / NCTC 10341 / NRRL NRS-1264 / Gibson 46).